The chain runs to 131 residues: MRYGEKEIQEFDPKKDLEIWPNKHNKPYKIKITLPEFSCLCPRSGYPDYATMHLEYIPDQYVVELKALKLYINSFRNRYISHEDSTNEIFDTLYSKLKPKYMRLVADFNPRGNVHTLIEIDSEEIEKVSNG.

The Thioimide intermediate role is filled by C41. The active-site Proton donor is the D48. Residues 63 to 65 (VEL) and 82 to 83 (HE) each bind substrate.

This sequence belongs to the GTP cyclohydrolase I family. QueF type 1 subfamily.

It localises to the cytoplasm. It catalyses the reaction 7-aminomethyl-7-carbaguanine + 2 NADP(+) = 7-cyano-7-deazaguanine + 2 NADPH + 3 H(+). It functions in the pathway tRNA modification; tRNA-queuosine biosynthesis. Its function is as follows. Catalyzes the NADPH-dependent reduction of 7-cyano-7-deazaguanine (preQ0) to 7-aminomethyl-7-deazaguanine (preQ1). The chain is NADPH-dependent 7-cyano-7-deazaguanine reductase from Nitratiruptor sp. (strain SB155-2).